We begin with the raw amino-acid sequence, 280 residues long: Putative aquaporin-10 (280 aa).

Residues 1–8 (MEAVSSEY) lie on the Cytoplasmic side of the membrane. The helical transmembrane segment at 9–29 (YFPLYSALGYFALVFGIGEIA) threads the bilayer. The Extracellular segment spans residues 30–64 (RIITAKYVSPRGNSQLFLYELIGTIQMCTCVYENG). A helical transmembrane segment spans residues 65–85 (IIFKNYGFPAIFICVALLLTA). Residues 86 to 114 (GNIFNRGAMTNCAPIFEQFVFGNLGSSKF) lie on the Cytoplasmic side of the membrane. The helical transmembrane segment at 115–135 (LTILSAQLIGATFASKFAYLI) threads the bilayer. Topologically, residues 136–164 (WNITAPYSTAHLENASNLECILHYKQTAG) are extracellular. The helical transmembrane segment at 165–185 (IVIGFEIVGAFVVRIVVAQLL) threads the bilayer. Topologically, residues 186–193 (ARPALIKL) are cytoplasmic. A helical membrane pass occupies residues 194–214 (IPFAISAYLSLALYVVGVPGL). The Extracellular segment spans residues 215-233 (NPIVATARLYGCRGIDNSS). Residues 234 to 254 (FFILYWFCPVLGWLTGAYVVG) traverse the membrane as a helical segment. Residues 255–280 (QKSPSKKSAKDVKAEKKAKAAAKKSD) are Cytoplasmic-facing. Residues 256–280 (KSPSKKSAKDVKAEKKAKAAAKKSD) are disordered. Residues 262–280 (SAKDVKAEKKAKAAAKKSD) show a composition bias toward basic and acidic residues.

This sequence belongs to the MIP/aquaporin (TC 1.A.8) family.

The protein resides in the membrane. This Caenorhabditis elegans protein is Putative aquaporin-10 (aqp-10).